The chain runs to 370 residues: Heme A synthase (370 aa).

The next 8 helical transmembrane spans lie at valine 15–alanine 35, valine 104–proline 124, alanine 129–alanine 149, valine 161–leucine 181, alanine 200–leucine 220, glutamine 261–isoleucine 280, glycine 293–leucine 313, and proline 317–leucine 337. A heme-binding site is contributed by histidine 264. Histidine 324 contacts heme.

Belongs to the COX15/CtaA family. Type 2 subfamily. As to quaternary structure, interacts with CtaB. It depends on heme b as a cofactor.

The protein resides in the cell membrane. It carries out the reaction Fe(II)-heme o + 2 A + H2O = Fe(II)-heme a + 2 AH2. Its pathway is porphyrin-containing compound metabolism; heme A biosynthesis; heme A from heme O: step 1/1. Its function is as follows. Catalyzes the conversion of heme O to heme A by two successive hydroxylations of the methyl group at C8. The first hydroxylation forms heme I, the second hydroxylation results in an unstable dihydroxymethyl group, which spontaneously dehydrates, resulting in the formyl group of heme A. The polypeptide is Heme A synthase (Rhodopseudomonas palustris (strain TIE-1)).